The primary structure comprises 155 residues: Putative pre-16S rRNA nuclease (155 aa).

Residues 136 to 155 (DAERATSRPPGHPVEPRIGP) form a disordered region.

This sequence belongs to the YqgF nuclease family.

It localises to the cytoplasm. Functionally, could be a nuclease involved in processing of the 5'-end of pre-16S rRNA. The chain is Putative pre-16S rRNA nuclease from Leifsonia xyli subsp. xyli (strain CTCB07).